Reading from the N-terminus, the 180-residue chain is MANRLKEKYLNEVVPALTEKFNYTSVMAVPKVDKIVLNMGVGDAVSNAKNLEKAAAELALISGQKPLITKAKKSIAGFRLREGVAIGAKVTLRGQRMYEFLDKLVTVSLPRVRDFHGVPTKSFDGRGNYTLGVKEQLIFPEINFDNVDKVRGLDIVIVTTANTDEESRELLTGLGMPFAK.

Belongs to the universal ribosomal protein uL5 family. In terms of assembly, part of the 50S ribosomal subunit; part of the 5S rRNA/L5/L18/L25 subcomplex. Contacts the 5S rRNA and the P site tRNA. Forms a bridge to the 30S subunit in the 70S ribosome.

This is one of the proteins that bind and probably mediate the attachment of the 5S RNA into the large ribosomal subunit, where it forms part of the central protuberance. In the 70S ribosome it contacts protein S13 of the 30S subunit (bridge B1b), connecting the 2 subunits; this bridge is implicated in subunit movement. Contacts the P site tRNA; the 5S rRNA and some of its associated proteins might help stabilize positioning of ribosome-bound tRNAs. The polypeptide is Large ribosomal subunit protein uL5 (Streptococcus mutans serotype c (strain ATCC 700610 / UA159)).